Consider the following 440-residue polypeptide: 5-methylthioadenosine/S-adenosylhomocysteine deaminase (440 aa).

Zn(2+) contacts are provided by H70 and H72. Residues E99 and H191 each coordinate substrate. A Zn(2+)-binding site is contributed by H218. Residues E221 and D306 each contribute to the substrate site. D306 is a Zn(2+) binding site.

The protein belongs to the metallo-dependent hydrolases superfamily. MTA/SAH deaminase family. It depends on Zn(2+) as a cofactor.

The catalysed reaction is S-adenosyl-L-homocysteine + H2O + H(+) = S-inosyl-L-homocysteine + NH4(+). It carries out the reaction S-methyl-5'-thioadenosine + H2O + H(+) = S-methyl-5'-thioinosine + NH4(+). Catalyzes the deamination of 5-methylthioadenosine and S-adenosyl-L-homocysteine into 5-methylthioinosine and S-inosyl-L-homocysteine, respectively. Is also able to deaminate adenosine. The chain is 5-methylthioadenosine/S-adenosylhomocysteine deaminase from Nitratidesulfovibrio vulgaris (strain DSM 19637 / Miyazaki F) (Desulfovibrio vulgaris).